Consider the following 341-residue polypeptide: Ribosomal RNA small subunit methyltransferase H (341 aa).

S-adenosyl-L-methionine is bound by residues 47–49 (GGY), Asp64, Phe97, Asp109, and Gln116.

The protein belongs to the methyltransferase superfamily. RsmH family.

It localises to the cytoplasm. It carries out the reaction cytidine(1402) in 16S rRNA + S-adenosyl-L-methionine = N(4)-methylcytidine(1402) in 16S rRNA + S-adenosyl-L-homocysteine + H(+). Specifically methylates the N4 position of cytidine in position 1402 (C1402) of 16S rRNA. This Allorhizobium ampelinum (strain ATCC BAA-846 / DSM 112012 / S4) (Agrobacterium vitis (strain S4)) protein is Ribosomal RNA small subunit methyltransferase H.